The following is a 73-amino-acid chain: Conotoxin Vc6.17 (73 aa).

The signal sequence occupies residues 1 to 19 (MQKLIILLLVAAVLMSTQA). Residues 20–44 (LFQEKRRKEKIDLLSKRKTDAEKQH) constitute a propeptide that is removed on maturation. 3 disulfide bridges follow: Cys48–Cys62, Cys55–Cys66, and Cys61–Cys71.

It belongs to the conotoxin O2 superfamily. Expressed by the venom duct.

The protein localises to the secreted. Functionally, inhibits voltage-gated ion channels. This Conus victoriae (Queen Victoria cone) protein is Conotoxin Vc6.17.